Here is a 327-residue protein sequence, read N- to C-terminus: Methionyl-tRNA formyltransferase (327 aa).

Residue 121 to 124 (SLLP) coordinates (6S)-5,6,7,8-tetrahydrofolate.

It belongs to the Fmt family.

It catalyses the reaction L-methionyl-tRNA(fMet) + (6R)-10-formyltetrahydrofolate = N-formyl-L-methionyl-tRNA(fMet) + (6S)-5,6,7,8-tetrahydrofolate + H(+). Functionally, attaches a formyl group to the free amino group of methionyl-tRNA(fMet). The formyl group appears to play a dual role in the initiator identity of N-formylmethionyl-tRNA by promoting its recognition by IF2 and preventing the misappropriation of this tRNA by the elongation apparatus. In Burkholderia multivorans (strain ATCC 17616 / 249), this protein is Methionyl-tRNA formyltransferase.